A 213-amino-acid polypeptide reads, in one-letter code: Thymidylate kinase (213 aa).

7-14 is a binding site for ATP; it reads GMDGSGKT.

Belongs to the thymidylate kinase family.

The catalysed reaction is dTMP + ATP = dTDP + ADP. Its function is as follows. Phosphorylation of dTMP to form dTDP in both de novo and salvage pathways of dTTP synthesis. This chain is Thymidylate kinase, found in Mycoplasma capricolum subsp. capricolum (strain California kid / ATCC 27343 / NCTC 10154).